The following is a 231-amino-acid chain: Probable septum site-determining protein MinC (231 aa).

The protein belongs to the MinC family. Interacts with MinD and FtsZ.

Cell division inhibitor that blocks the formation of polar Z ring septums. Rapidly oscillates between the poles of the cell to destabilize FtsZ filaments that have formed before they mature into polar Z rings. Prevents FtsZ polymerization. The sequence is that of Probable septum site-determining protein MinC from Bradyrhizobium diazoefficiens (strain JCM 10833 / BCRC 13528 / IAM 13628 / NBRC 14792 / USDA 110).